A 469-amino-acid polypeptide reads, in one-letter code: Argininosuccinate lyase (469 aa).

It belongs to the lyase 1 family. Argininosuccinate lyase subfamily.

It is found in the cytoplasm. It carries out the reaction 2-(N(omega)-L-arginino)succinate = fumarate + L-arginine. It participates in amino-acid biosynthesis; L-arginine biosynthesis; L-arginine from L-ornithine and carbamoyl phosphate: step 3/3. The sequence is that of Argininosuccinate lyase from Burkholderia cenocepacia (strain HI2424).